Reading from the N-terminus, the 72-residue chain is DNA-directed RNA polymerase subunit omega (72 aa).

This sequence belongs to the RNA polymerase subunit omega family. In terms of assembly, the RNAP catalytic core consists of 2 alpha, 1 beta, 1 beta' and 1 omega subunit. When a sigma factor is associated with the core the holoenzyme is formed, which can initiate transcription.

It carries out the reaction RNA(n) + a ribonucleoside 5'-triphosphate = RNA(n+1) + diphosphate. Functionally, promotes RNA polymerase assembly. Latches the N- and C-terminal regions of the beta' subunit thereby facilitating its interaction with the beta and alpha subunits. This Lactobacillus johnsonii (strain CNCM I-12250 / La1 / NCC 533) protein is DNA-directed RNA polymerase subunit omega.